A 253-amino-acid polypeptide reads, in one-letter code: Histone H1.4 (253 aa).

Positions 1-33 are enriched in low complexity; that stretch reads MSDVAVAADTTETPAAPTKASKATKASKATKAS. A disordered region spans residues 1–43; it reads MSDVAVAADTTETPAAPTKASKATKASKATKASKATKAKTTKV. The residue at position 2 (serine 2) is an N-acetylserine. One can recognise an H15 domain in the interval 51 to 127; it reads AHPPFINMVT…GANGRFRLAE (77 aa). The segment at 134–253 is disordered; it reads KSPAAAKKDA…KKAPAAAPEA (120 aa). 2 stretches are compositionally biased toward basic and acidic residues: residues 139 to 149 and 188 to 200; these read AKKDATGEKKA and AAGD…EVKV. 2 stretches are compositionally biased toward basic residues: residues 201–210 and 234–244; these read KKVKSPKKIA and APKKAAAKPAK.

Belongs to the histone H1/H5 family.

The protein localises to the nucleus. Its subcellular location is the chromosome. Histones H1 are necessary for the condensation of nucleosome chains into higher-order structures. This Caenorhabditis elegans protein is Histone H1.4 (hil-4).